We begin with the raw amino-acid sequence, 530 residues long: C2H2-type transcription factor MSN2 (530 aa).

C2H2-type zinc fingers lie at residues 409-432 (FVCDLCNRRFRRQEHLKRHYRSLH) and 438-460 (FECNECGKKFSRSDNLAQHARTH).

The protein resides in the nucleus. The protein localises to the cytoplasm. Transcription factor that acts as a key downstream transcription factor in the HOG1-MAPK pathway. Plays crucial roles in the regulation of conidiation, virulence and multi-stress responses. In addition to regulating the expression of genes specifically involved in stress-response, conidiation and virulence, controls also expression of cellular signaling factors. This is C2H2-type transcription factor MSN2 from Metarhizium robertsii (strain ARSEF 23 / ATCC MYA-3075) (Metarhizium anisopliae (strain ARSEF 23)).